The following is a 104-amino-acid chain: Large ribosomal subunit protein uL24 (104 aa).

Belongs to the universal ribosomal protein uL24 family. As to quaternary structure, part of the 50S ribosomal subunit.

One of two assembly initiator proteins, it binds directly to the 5'-end of the 23S rRNA, where it nucleates assembly of the 50S subunit. Functionally, one of the proteins that surrounds the polypeptide exit tunnel on the outside of the subunit. The protein is Large ribosomal subunit protein uL24 of Bradyrhizobium diazoefficiens (strain JCM 10833 / BCRC 13528 / IAM 13628 / NBRC 14792 / USDA 110).